Consider the following 132-residue polypeptide: Z-ring associated protein G (132 aa).

The helical transmembrane segment at 1-21 (MTWEYALIGLVVGIIIGAVAM) threads the bilayer. A disordered region spans residues 95-132 (FRNRLAESEASNDQAPVQMPRDYSEGASGLLRTGAKRD).

It belongs to the ZapG family.

Its subcellular location is the cell inner membrane. In terms of biological role, involved in cell division, cell envelope biogenesis and cell shape maintenance. This chain is Z-ring associated protein G, found in Escherichia coli O157:H7.